The chain runs to 171 residues: uncharacterized protein (171 aa).

Functionally, required for production of the bacteriocin SkfA. This is an uncharacterized protein from Bacillus subtilis (strain 168).